The primary structure comprises 1229 residues: uncharacterized protein (1229 aa).

The signal sequence occupies residues 1–19 (MKYFLLLFLLVLSFTLVES). Residues Asn-238, Asn-270, Asn-370, Asn-538, Asn-691, and Asn-701 are each glycosylated (N-linked (GlcNAc...) asparagine). Residues 678–813 (RMVNFANVME…QWNIDTVKMN (136 aa)) enclose the Galectin 1 domain. The span at 818-829 (HTTTVEPSTPLE) shows a compositional bias: polar residues. Residues 818-903 (HTTTVEPSTP…TLPPTTTPYN (86 aa)) form a disordered region. Low complexity predominate over residues 830 to 846 (TASTSQSTPSATLTSTT). A compositionally biased stretch (polar residues) spans 847 to 869 (ENIPSTSKIPETSTTQRPTSPIL). Residues 870–901 (TSGATSTSSSTESTTTSPTTSTTTTLPPTTTP) are compositionally biased toward low complexity. N-linked (GlcNAc...) asparagine glycans are attached at residues Asn-903, Asn-938, and Asn-948. The Galectin 2 domain occupies 925–1059 (RPVVFSRYME…ESTIDTVSMA (135 aa)). Positions 1061–1087 (VRPPTTPTTTTSTTTTTTPKLTTTSTL) are disordered. The span at 1067-1087 (PTTTTSTTTTTTPKLTTTSTL) shows a compositional bias: low complexity. An N-linked (GlcNAc...) asparagine glycan is attached at Asn-1146.

This is an uncharacterized protein from Caenorhabditis elegans.